Here is a 390-residue protein sequence, read N- to C-terminus: Probable tRNA sulfurtransferase (390 aa).

The 103-residue stretch at 60–162 (KQIIDDLKEV…YDCAIVYGHK (103 aa)) folds into the THUMP domain. ATP-binding positions include 180–181 (LL), 205–206 (TF), R264, G286, and Q295.

It belongs to the ThiI family.

The protein localises to the cytoplasm. It carries out the reaction [ThiI sulfur-carrier protein]-S-sulfanyl-L-cysteine + a uridine in tRNA + 2 reduced [2Fe-2S]-[ferredoxin] + ATP + H(+) = [ThiI sulfur-carrier protein]-L-cysteine + a 4-thiouridine in tRNA + 2 oxidized [2Fe-2S]-[ferredoxin] + AMP + diphosphate. The catalysed reaction is [ThiS sulfur-carrier protein]-C-terminal Gly-Gly-AMP + S-sulfanyl-L-cysteinyl-[cysteine desulfurase] + AH2 = [ThiS sulfur-carrier protein]-C-terminal-Gly-aminoethanethioate + L-cysteinyl-[cysteine desulfurase] + A + AMP + 2 H(+). It participates in cofactor biosynthesis; thiamine diphosphate biosynthesis. Functionally, catalyzes the ATP-dependent transfer of a sulfur to tRNA to produce 4-thiouridine in position 8 of tRNAs, which functions as a near-UV photosensor. Also catalyzes the transfer of sulfur to the sulfur carrier protein ThiS, forming ThiS-thiocarboxylate. This is a step in the synthesis of thiazole, in the thiamine biosynthesis pathway. The sulfur is donated as persulfide by IscS. The polypeptide is Probable tRNA sulfurtransferase (Ureaplasma parvum serovar 3 (strain ATCC 27815 / 27 / NCTC 11736)).